Here is a 176-residue protein sequence, read N- to C-terminus: RNA pyrophosphohydrolase (176 aa).

A Nudix hydrolase domain is found at 6–149 (GYRPNVGIVI…KRDVYRRVMK (144 aa)). A Nudix box motif is present at residues 38 to 59 (GGINPGESPEQAMYRELFEEVG).

The protein belongs to the Nudix hydrolase family. RppH subfamily. Requires a divalent metal cation as cofactor.

Its function is as follows. Accelerates the degradation of transcripts by removing pyrophosphate from the 5'-end of triphosphorylated RNA, leading to a more labile monophosphorylated state that can stimulate subsequent ribonuclease cleavage. This Proteus mirabilis (strain HI4320) protein is RNA pyrophosphohydrolase.